The primary structure comprises 1481 residues: Cystic fibrosis transmembrane conductance regulator (1481 aa).

Topologically, residues 1–77 (MQRSPLEKAS…KLINALRRCF (77 aa)) are cytoplasmic. The chain crosses the membrane as a helical span at residues 78-98 (FWRFMFYGIILYLGEVTKAVQ). In terms of domain architecture, ABC transmembrane type-1 1 spans 81–365 (FMFYGIILYL…WAVQTWYDSL (285 aa)). At 99–122 (PLLLGRIIASYDPDNKVERSIAIY) the chain is on the extracellular side. The chain crosses the membrane as a helical span at residues 123-146 (LGIGLCLLFIVRTLLLHPAIFGLH). Residues 147 to 195 (HIGMQMRIAMFSLIYKKTLKLSSRVLDKISIGQLVSLLSNNLNKFDEGL) lie on the Cytoplasmic side of the membrane. The helical transmembrane segment at 196–216 (ALAHFVWIAPLQVTLLMGLLW) threads the bilayer. The Extracellular segment spans residues 217–222 (DLLQAF). Residues 223–243 (TFCGLAFLVVLALLQAGLGKM) traverse the membrane as a helical segment. Topologically, residues 244-298 (MMKYRDQRAGKINERLVITSEMIENIQSVKAYCWEEAMEKIIENLRQTELKLTRK) are cytoplasmic. A helical membrane pass occupies residues 299–319 (AAYVRYLNSSAFFFSGFFVVF). The Extracellular portion of the chain corresponds to 320–339 (LSVLPYALLKGIILRKIFTT). The helical transmembrane segment at 340 to 358 (ISFCIVLRMAVTRQFPWAV) threads the bilayer. The Cytoplasmic portion of the chain corresponds to 359–858 (QTWYDSLGAI…YLRYITVHKS (500 aa)). Residues Trp401, 457-464 (GSTGAGKT), and Gln492 contribute to the ATP site. The ABC transporter 1 domain occupies 421–645 (ISNCDTSLFF…RPDFSSKLMG (225 aa)). Cys523 carries S-palmitoyl cysteine lipidation. Residues Ser548 and Ser659 each carry the phosphoserine modification. The tract at residues 653 to 831 (TAERRNSIIT…EEINEEDLRD (179 aa)) is disordered R region. Ser669 is subject to Phosphoserine; by PKA. At Ser685 the chain carries Phosphoserine. A Glycyl lysine isopeptide (Lys-Gly) (interchain with G-Cter in ubiquitin) cross-link involves residue Lys687. Ser699 and Ser711 each carry phosphoserine. A Phosphothreonine modification is found at Thr716. Ser736, Ser767, Ser790, Ser795, and Ser813 each carry phosphoserine. Residues 859 to 879 (LMFVLIWCLVVFLVEVAASLV) traverse the membrane as a helical segment. One can recognise an ABC transmembrane type-1 2 domain in the interval 859–1155 (LMFVLIWCLV…AVNSSIDVDS (297 aa)). The Extracellular portion of the chain corresponds to 880-918 (VLCLFPKILLQDKGNSTKNASNSYAVIITSTSSYYIFYI). Asn894 and Asn898 each carry an N-linked (GlcNAc...) asparagine glycan. A discontinuously helical transmembrane segment spans residues 919-939 (YVGVADTLLALGLFRGLPLVH). The Cytoplasmic segment spans residues 940–990 (TLITVSKTLHHKMLQSVLQAPMSTLNTLKTGGILNRFSKDIAVLDDLLPLT). A helical transmembrane segment spans residues 991–1011 (IFDFIQLLLIVIGAVVVVSVL). Residues 1012–1013 (QP) are Extracellular-facing. The chain crosses the membrane as a helical span at residues 1014-1034 (YIFLATVPVIAAFILLRGYFL). Residues 1035–1095 (HTSQQLKQLE…TANWFLYLST (61 aa)) are Cytoplasmic-facing. Residues 1096–1116 (LRWFQMRIEMIFVIFFIAVTF) form a helical membrane-spanning segment. The Extracellular segment spans residues 1117-1130 (ISILTTGEGEGRVG). The chain crosses the membrane as a helical span at residues 1131–1151 (IILTLAMNIMGTLQWAVNSSI). Topologically, residues 1152-1481 (DVDSLMRSVS…TEEEVQETKL (330 aa)) are cytoplasmic. The ABC transporter 2 domain maps to 1211–1444 (MTVKDLTAKY…KSLFRQAISP (234 aa)). ATP is bound by residues Tyr1220 and 1245–1252 (GRTGSGKS). The segment at 1387–1481 (RTLKQAFADC…TEEEVQETKL (95 aa)) is interaction with GORASP2. Cys1396 carries S-palmitoyl cysteine lipidation. Ser1457 is modified (phosphoserine). A PDZ-binding motif is present at residues 1479 to 1481 (TKL).

Belongs to the ABC transporter superfamily. ABCC family. CFTR transporter (TC 3.A.1.202) subfamily. Monomer; does not require oligomerization for channel activity. May form oligomers in the membrane. Interacts with SLC26A3, SLC26A6 and NHERF1. Interacts with SHANK2. Interacts with MYO6. Interacts (via C-terminus) with GOPC (via PDZ domain); this promotes CFTR internalization and thereby decreases channel activity. Interacts with SLC4A7 through NHERF1. Found in a complex with MYO5B and RAB11A. Interacts with ANO1. Interacts with SLC26A8. Interacts with AHCYL1; the interaction increases CFTR activity. Interacts with CSE1L. The core-glycosylated form interacts with GORASP2 (via PDZ GRASP-type 1 domain) in respone to ER stress. Interacts with MARCHF2; the interaction leads to CFTR ubiqtuitination and degradation. Interacts with ADGRG2. Post-translationally, N-glycosylated. Phosphorylated; cAMP treatment promotes phosphorylation and activates the channel. Dephosphorylation decreases the ATPase activity (in vitro). Phosphorylation at PKA sites activates the channel. Phosphorylation at PKC sites enhances the response to phosphorylation by PKA. Phosphorylated by AMPK; this inhibits channel activity. In terms of processing, ubiquitinated, leading to its degradation in the lysosome. Deubiquitination by USP10 in early endosomes enhances its endocytic recycling to the cell membrane. Ubiquitinated by RNF185 during ER stress. Ubiquitinated by MARCHF2.

The protein localises to the apical cell membrane. Its subcellular location is the early endosome membrane. It localises to the cell membrane. The protein resides in the recycling endosome membrane. It is found in the endoplasmic reticulum membrane. The protein localises to the nucleus. It catalyses the reaction ATP + H2O + closed Cl(-) channel = ADP + phosphate + open Cl(-) channel.. The enzyme catalyses chloride(in) = chloride(out). It carries out the reaction hydrogencarbonate(in) = hydrogencarbonate(out). The catalysed reaction is ATP + H2O = ADP + phosphate + H(+). Epithelial ion channel that plays an important role in the regulation of epithelial ion and water transport and fluid homeostasis. Mediates the transport of chloride ions across the cell membrane. Possesses an intrinsic ATPase activity and utilizes ATP to gate its channel; the passive flow of anions through the channel is gated by cycles of ATP binding and hydrolysis by the ATP-binding domains. The ion channel is also permeable to HCO(3)(-); selectivity depends on the extracellular chloride concentration. Exerts its function also by modulating the activity of other ion channels and transporters. Contributes to the regulation of the pH and the ion content of the epithelial fluid layer. Modulates the activity of the epithelial sodium channel (ENaC) complex, in part by regulating the cell surface expression of the ENaC complex. May regulate bicarbonate secretion and salvage in epithelial cells by regulating the transporter SLC4A7. Can inhibit the chloride channel activity of ANO1. Plays a role in the chloride and bicarbonate homeostasis during sperm epididymal maturation and capacitation. This is Cystic fibrosis transmembrane conductance regulator from Ovis aries (Sheep).